The following is a 137-amino-acid chain: Nucleoside diphosphate kinase (137 aa).

Positions 10, 58, 86, 92, 103, and 113 each coordinate ATP. His116 functions as the Pros-phosphohistidine intermediate in the catalytic mechanism.

It belongs to the NDK family. Homotetramer. Mg(2+) is required as a cofactor.

The protein resides in the cytoplasm. It carries out the reaction a 2'-deoxyribonucleoside 5'-diphosphate + ATP = a 2'-deoxyribonucleoside 5'-triphosphate + ADP. The enzyme catalyses a ribonucleoside 5'-diphosphate + ATP = a ribonucleoside 5'-triphosphate + ADP. Its function is as follows. Major role in the synthesis of nucleoside triphosphates other than ATP. The ATP gamma phosphate is transferred to the NDP beta phosphate via a ping-pong mechanism, using a phosphorylated active-site intermediate. The chain is Nucleoside diphosphate kinase from Helicobacter pylori (strain G27).